A 240-amino-acid polypeptide reads, in one-letter code: tRNA1(Val) (adenine(37)-N6)-methyltransferase (240 aa).

The protein belongs to the methyltransferase superfamily. tRNA (adenine-N(6)-)-methyltransferase family.

Its subcellular location is the cytoplasm. It carries out the reaction adenosine(37) in tRNA1(Val) + S-adenosyl-L-methionine = N(6)-methyladenosine(37) in tRNA1(Val) + S-adenosyl-L-homocysteine + H(+). In terms of biological role, specifically methylates the adenine in position 37 of tRNA(1)(Val) (anticodon cmo5UAC). The chain is tRNA1(Val) (adenine(37)-N6)-methyltransferase from Christiangramia forsetii (strain DSM 17595 / CGMCC 1.15422 / KT0803) (Gramella forsetii).